We begin with the raw amino-acid sequence, 1031 residues long: Putative protein TIC 214 N-terminal part (1031 aa).

The next 6 membrane-spanning stretches (helical) occupy residues 11–31 (ILWAQILSWISISGPLILFGL), 68–88 (TLGQLIILISIFYSPLYIMLL), 92–112 (AITLITLPYVLFYWYEIKDLS), 127–147 (GIIQIFLNSFLFQIFNPILLP), 166–186 (SFFVISLFCGWLGGNILLINL), and 212–232 (TFSIIIFVACLSYLGKFPVPF).

This sequence belongs to the TIC214 family. As to quaternary structure, part of the Tic complex.

It is found in the plastid. Its subcellular location is the chloroplast inner membrane. Its function is as follows. Involved in protein precursor import into chloroplasts. May be part of an intermediate translocation complex acting as a protein-conducting channel at the inner envelope. The polypeptide is Putative protein TIC 214 N-terminal part (Anthoceros angustus (Hornwort)).